We begin with the raw amino-acid sequence, 366 residues long: DNA integrity scanning protein DisA (366 aa).

The region spanning Val-21–Pro-159 is the DAC domain. ATP-binding positions include Gly-88, Leu-106, and Thr-119–Ser-123.

It belongs to the DisA family. Homooctamer. Mg(2+) is required as a cofactor.

The catalysed reaction is 2 ATP = 3',3'-c-di-AMP + 2 diphosphate. Participates in a DNA-damage check-point. DisA forms globular foci that rapidly scan along the chromosomes searching for lesions. Functionally, also has diadenylate cyclase activity, catalyzing the condensation of 2 ATP molecules into cyclic di-AMP (c-di-AMP). c-di-AMP likely acts as a signaling molecule that may couple DNA integrity with a cellular process. In Corynebacterium glutamicum (strain R), this protein is DNA integrity scanning protein DisA.